The sequence spans 167 residues: MHTPKHAIQRISKEEMEFFEGRCERMGEADETMWGTKWCGSGNEATDISELGYWSNLDSCCRTHDHCDNIPSGQTKYGLTNEGKYTMMNCKCETAFEQCLRNVTGGMEGPAAGFVRKTYFDLYGNGCYNVQCPSQRRLARSEECPDGVATYTGEAGYGAWAINKLNG.

Ca(2+)-binding residues include W38, G40, and G42. Cystine bridges form between C39–C61, C60–C99, C67–C92, C90–C127, and C132–C144. Residue H64 is part of the active site. Ca(2+) is bound at residue D65. N-linked (GlcNAc...) asparagine glycosylation is present at N102. The propeptide occupies 136–140; that stretch reads RRLAR.

This sequence belongs to the phospholipase A2 family. Group III subfamily. In terms of assembly, heterodimer composed of a large subunit and a small subunit; disulfide-linked. The cofactor is Ca(2+). Expressed by the venom gland.

The protein resides in the secreted. The catalysed reaction is a 1,2-diacyl-sn-glycero-3-phosphocholine + H2O = a 1-acyl-sn-glycero-3-phosphocholine + a fatty acid + H(+). In terms of biological role, phospholipase toxin, which may catalyze the calcium-dependent hydrolysis of the 2-acyl groups in 3-sn-phosphoglycerides. Inhibits both skeletal (RYR1) and cardiac (RYR2) ryanodine receptors (calcium release channels). Probably blocks ryanodine receptors by generating a lipid product. The chain is Phospholipase A2 imperatoxin-1 from Pandinus imperator (Emperor scorpion).